The primary structure comprises 284 residues: Diaminopimelate epimerase (284 aa).

2 residues coordinate substrate: Asn-13 and Asn-70. Cys-79 functions as the Proton donor in the catalytic mechanism. Substrate-binding positions include 80 to 81, Asn-167, Asn-200, and 218 to 219; these read GN and ER. The Proton acceptor role is filled by Cys-227. 228 to 229 contacts substrate; the sequence is GT.

It belongs to the diaminopimelate epimerase family. As to quaternary structure, homodimer.

Its subcellular location is the cytoplasm. The catalysed reaction is (2S,6S)-2,6-diaminopimelate = meso-2,6-diaminopimelate. It participates in amino-acid biosynthesis; L-lysine biosynthesis via DAP pathway; DL-2,6-diaminopimelate from LL-2,6-diaminopimelate: step 1/1. Functionally, catalyzes the stereoinversion of LL-2,6-diaminopimelate (L,L-DAP) to meso-diaminopimelate (meso-DAP), a precursor of L-lysine and an essential component of the bacterial peptidoglycan. This chain is Diaminopimelate epimerase, found in Prochlorococcus marinus (strain NATL1A).